The chain runs to 574 residues: MKASQFFISTLKEAPADAEIVSHKLMMRAGMIKKLGAGLYTYMPVGLRVIRKVEQIVREEMNAAGAVEVLMPVVQPGELWQETGRWDKMGDELLRFKDRHERDFVMQPTSEEVVTDIARTEIRSYKQLPVNFYQIQTKFRDERRPRFGIMRGREFTMKDAYSFDRDAEGLKVSYQKMYDAYTRIFQRFGLEFRAVAADNGAIGGSGSHEFHVIADTGEDAIIYCPDSDYAANIEAAEAVAPAAPRAAATEALTKTHTPGRAKCEAVAEQLGIPLQRTIKSIVLATEVEGGEPQIWLLLLRGDHELNEVKASKVPGLADFRFATEGEILRAFGTRPGYLGPVGTKLPVKVVADRTAAAMSDFVVGANEEDYHFTGVNWGRDLPEPEVYDLRNVVAGDASPDGKGTLAICRGIEVGHVFMLGTRYSEAMNATFLDENGKTQPMVMGCYGIGITRILGAAIEQNYDARGIIWPASIAPFQVVICPVGYDRSDAVREEADRLHAELVAAGIDVMLDDRGERPGAMFADWELIGVPFRVVVGDRGLKEGKLEFQGRRDEAATAVAPADVLATLKARLAQ.

It belongs to the class-II aminoacyl-tRNA synthetase family. ProS type 1 subfamily. As to quaternary structure, homodimer.

The protein resides in the cytoplasm. It catalyses the reaction tRNA(Pro) + L-proline + ATP = L-prolyl-tRNA(Pro) + AMP + diphosphate. Functionally, catalyzes the attachment of proline to tRNA(Pro) in a two-step reaction: proline is first activated by ATP to form Pro-AMP and then transferred to the acceptor end of tRNA(Pro). As ProRS can inadvertently accommodate and process non-cognate amino acids such as alanine and cysteine, to avoid such errors it has two additional distinct editing activities against alanine. One activity is designated as 'pretransfer' editing and involves the tRNA(Pro)-independent hydrolysis of activated Ala-AMP. The other activity is designated 'posttransfer' editing and involves deacylation of mischarged Ala-tRNA(Pro). The misacylated Cys-tRNA(Pro) is not edited by ProRS. This Ralstonia pickettii (strain 12J) protein is Proline--tRNA ligase.